We begin with the raw amino-acid sequence, 73 residues long: Homeodomain-only protein (73 aa).

Positions 3-62 (AEPANGPTEDQVEILEYNFNKVNRHPDPTTLCLIAAEAGLSEEETQKWFKQRLAQWRRSE) form a DNA-binding region, homeobox; degenerate.

In terms of assembly, interacts with serum response factor (SRF). Component of a large complex containing histone deacetylases such as HDAC2. Interacts with the acetylated forms of HSPA1A and HSPA1B. Interacts with HSPA8.

The protein resides in the nucleus. Its subcellular location is the cytoplasm. In terms of biological role, atypical homeodomain protein which does not bind DNA and is required to modulate cardiac growth and development. Acts via its interaction with SRF, thereby modulating the expression of SRF-dependent cardiac-specific genes and cardiac development. Prevents SRF-dependent transcription either by inhibiting SRF binding to DNA or by recruiting histone deacetylase (HDAC) proteins that prevent transcription by SRF. Overexpression causes cardiac hypertrophy. Acts as a co-chaperone for HSPA1A and HSPA1B chaperone proteins and assists in chaperone-mediated protein refolding. The chain is Homeodomain-only protein (HOPX) from Sus scrofa (Pig).